The sequence spans 422 residues: MSSQVVGIEPLYIKAEPASPDSPKGSSETETEPPVALAPGPAPTRCLPGHKEEEDGEGAGPGEQGGGKLVLSSLPKRLCLVCGDVASGYHYGVASCEACKAFFKRTIQGSIEYSCPASNECEITKRRRKACQACRFTKCLRVGMLKEGVRLDRVRGGRQKYKRRPEVDPLPFPGSFPAGPLAVAGGPRKTAPVNALVSHLLVVEPEKLYAMPDPAGPDGHLPAVATLCDLFDREIVVTISWAKSIPGFSSLSLSDQMSVLQSVWMEVLVLGVAQRSLPLQDELAFAEDLVLDEEGARAAGLGELGAVLLQLVRRLQALRLEREEYVLLKALALANSDSVHIEDAEAVEQLREALHEALLEYEAGRAGPGGGAERRRAGRLLLTLPLLRQTAGKVLAHFYGVKLEGKVPMHKLFLEMLEAMMD.

Residues 1–67 (MSSQVVGIEP…GAGPGEQGGG (67 aa)) form a disordered region. 2 positions are modified to phosphoserine: S19 and S22. Residues 58–67 (GAGPGEQGGG) show a composition bias toward gly residues. A DNA-binding region (nuclear receptor) is located at residues 76 to 151 (KRLCLVCGDV…VGMLKEGVRL (76 aa)). 2 NR C4-type zinc fingers span residues 79–99 (CLVCGDVASGYHYGVASCEAC) and 115–134 (CPASNECEITKRRRKACQAC). 4 positions are modified to N6-acetyllysine; by PCAF/KAT2B: K129, K138, K160, and K162. Residues K189 and K402 each participate in a glycyl lysine isopeptide (Lys-Gly) (interchain with G-Cter in SUMO2) cross-link. In terms of domain architecture, NR LBD spans 192 to 420 (PVNALVSHLL…KLFLEMLEAM (229 aa)).

The protein belongs to the nuclear hormone receptor family. NR3 subfamily. Binds DNA as a monomer or a homodimer. Interacts (via the AF2 domain) with coactivator PPARGC1A (via the L3 motif); the interaction greatly enhances transcriptional activity of genes involved in energy metabolism. Interacts with PIAS4; the interaction enhances sumoylation. Interacts with MAPK15; promotes re-localization of ESRRA to the cytoplasm through a XPO1-dependent mechanism then inhibits ESRRA transcriptional activity. In terms of processing, phosphorylation on Ser-19 enhances sumoylation on Lys-14 increasing repression of transcriptional activity. Sumoylated with SUMO2. Main site is Lys-14 which is enhanced by phosphorylation on Ser-19, cofactor activation, and by interaction with PIAS4. Sumoylation enhances repression of transcriptional activity, but has no effect on subcellular location nor on DNA binding. Post-translationally, reversibly acetylated. Acetylation by PCAF/KAT2 at Lys-129, Lys-138, Lys-160 and Lys-162 and PCAF/KAT2 decreases transcriptional activity probably by inhibiting DNA-binding activity; deacetylation involves SIRT1 and HDAC8 and increases DNA-binding.

It is found in the nucleus. The protein resides in the cytoplasm. Functionally, binds to an ERR-alpha response element (ERRE) containing a single consensus half-site, 5'-TNAAGGTCA-3'. Can bind to the medium-chain acyl coenzyme A dehydrogenase (MCAD) response element NRRE-1 and may act as an important regulator of MCAD promoter. May function as a modulator of the estrogen signaling pathway in the uterus. Induces the expression of PERM1 in the skeletal muscle. This chain is Steroid hormone receptor ERR1 (ESRRA), found in Canis lupus familiaris (Dog).